A 334-amino-acid polypeptide reads, in one-letter code: Probable fructose-bisphosphate aldolase class 1 (334 aa).

Belongs to the class I fructose-bisphosphate aldolase family.

The enzyme catalyses beta-D-fructose 1,6-bisphosphate = D-glyceraldehyde 3-phosphate + dihydroxyacetone phosphate. The protein operates within carbohydrate degradation; glycolysis; D-glyceraldehyde 3-phosphate and glycerone phosphate from D-glucose: step 4/4. This chain is Probable fructose-bisphosphate aldolase class 1, found in Xylella fastidiosa (strain Temecula1 / ATCC 700964).